The following is a 651-amino-acid chain: Acetyl-coenzyme A synthetase (651 aa).

CoA contacts are provided by residues 189–192, T311, and N335; that span reads RGGK. ATP-binding positions include 387–389, 411–416, D500, and R515; these read GEP and DTWWQT. S523 contributes to the CoA binding site. R526 is an ATP binding site. Mg(2+)-binding residues include V537, H539, and V542. CoA is bound at residue R586. Residue K611 is modified to N6-acetyllysine.

This sequence belongs to the ATP-dependent AMP-binding enzyme family. Requires Mg(2+) as cofactor. Post-translationally, acetylated. Deacetylation by the SIR2-homolog deacetylase activates the enzyme.

The catalysed reaction is acetate + ATP + CoA = acetyl-CoA + AMP + diphosphate. Functionally, catalyzes the conversion of acetate into acetyl-CoA (AcCoA), an essential intermediate at the junction of anabolic and catabolic pathways. AcsA undergoes a two-step reaction. In the first half reaction, AcsA combines acetate with ATP to form acetyl-adenylate (AcAMP) intermediate. In the second half reaction, it can then transfer the acetyl group from AcAMP to the sulfhydryl group of CoA, forming the product AcCoA. This is Acetyl-coenzyme A synthetase from Brucella melitensis biotype 2 (strain ATCC 23457).